Reading from the N-terminus, the 365-residue chain is MYPPGCAKVKCSWHHCLPGLLLQLLLALCFFSYLRMSQEKPKPKPMWVSELGAPSQATEGSSAHLPLRVLLWTWPFNQPVALSRCSELWPGTADCQLTVNRSEYPQADAVLVHHREVSHRPQMQLPPSPRPPGQRWVWFSMESPSNCLKLKDLDGYFNLTMSYRRDSDIFMPYGWLEPWPSQPVETLLNISAKTKLVAWVVSNWNTDSIRVQYYKLLKPHLQVDVYGRFHTPLPHALMAKQLSQYKFYLAFENSLHPDYITEKLWKNALQAWAVPVVLGPSRVNYEQFLPPKAFIHVEDFQSPKDLAQYLLALDKDYASYLNYFRWRETLRPRSFSWALMFCKACWKLQQEPRYQTVPSIASWFQ.

At 1-15 (MYPPGCAKVKCSWHH) the chain is on the cytoplasmic side. Residues 16-34 (CLPGLLLQLLLALCFFSYL) form a helical; Signal-anchor for type II membrane protein membrane-spanning segment. Topologically, residues 35–365 (RMSQEKPKPK…TVPSIASWFQ (331 aa)) are lumenal. N-linked (GlcNAc...) asparagine glycans are attached at residues asparagine 100, asparagine 158, and asparagine 189.

Belongs to the glycosyltransferase 10 family. In terms of processing, glycosylated. In terms of tissue distribution, liver, kidney, lung and brain.

Its subcellular location is the golgi apparatus. The protein resides in the golgi stack membrane. The catalysed reaction is a beta-D-galactosyl-(1-&gt;3)-N-acetyl-beta-D-glucosaminyl derivative + GDP-beta-L-fucose = a beta-D-galactosyl-(1-&gt;3)-[alpha-L-fucosyl-(1-&gt;4)]-N-acetyl-beta-D-glucosaminyl derivative + GDP + H(+). The enzyme catalyses an N-acetyl-alpha-neuraminyl-(2-&gt;3)-beta-D-galactosyl-(1-&gt;4)-N-acetyl-beta-D-glucosaminyl derivative + GDP-beta-L-fucose = an alpha-Neu5Ac-(2-&gt;3)-beta-D-Gal-(1-&gt;4)-[alpha-L-Fuc-(1-&gt;3)]-beta-D-GlcNAc derivative + GDP + H(+). It catalyses the reaction a beta-D-galactosyl-(1-&gt;4)-N-acetyl-beta-D-glucosaminyl derivative + GDP-beta-L-fucose = a beta-D-galactosyl-(1-&gt;4)-[alpha-L-fucosyl-(1-&gt;3)]-N-acetyl-beta-D-glucosaminyl derivative + GDP + H(+). It carries out the reaction an alpha-Neu5Ac-(2-&gt;3)-beta-D-Gal-(1-&gt;4)-beta-D-GlcNAc-(1-&gt;3)-beta-D-Gal-(1-&gt;4)-[alpha-L-Fuc-(1-&gt;3)]-beta-D-GlcNAc derivative + GDP-beta-L-fucose = an alpha-Neu5Ac-(2-&gt;3)-beta-D-Gal-(1-&gt;4)-[alpha-L-Fuc-(1-&gt;3)]-beta-D-GlcNAc-(1-&gt;3)-beta-D-Gal-(1-&gt;4)-[alpha-L-Fuc-(1-&gt;3)]-beta-D-GlcNAc derivative + GDP + H(+). The catalysed reaction is Lc4Cer + GDP-beta-L-fucose = a lactoside III(4)-a-Fuc-Lc4Cer + GDP + H(+). The enzyme catalyses a beta-D-Gal-(1-&gt;3)-beta-D-GlcNAc-(1-&gt;3)-beta-D-Gal-(1-&gt;4)-beta-D-Glc-(1&lt;-&gt;1')-Cer(d18:1(4E)) + GDP-beta-L-fucose = a III(4)-a-Fuc-Lc4Cer(d18:1(4E)) + GDP + H(+). It catalyses the reaction N-acetyl-alpha-neuraminosyl-(2-&gt;3)-beta-D-galactosyl-(1-&gt;3)-[N-acetyl-alpha-neuraminosyl-(2-&gt;6)]-N-acetyl-beta-D-glucosaminyl-(1-&gt;3)-beta-D-galactosyl-(1-&gt;4)-beta-D-glucosyl-(1&lt;-&gt;1')-N-acyl-sphing-4-enine + GDP-beta-L-fucose = N-acetyl-alpha-neuraminosyl-(2-&gt;3)-beta-D-galactosyl-(1-&gt;3)-alpha-L-fucosyl-(1-&gt;4)-[N-acetyl-alpha-neuraminosyl-(2-&gt;6)-N-acetyl-beta-D-glucosaminyl-(1-&gt;3)]-beta-D-galactosyl-(1-&gt;4)-beta-D-glucosyl-(1&lt;-&gt;1')-N-acyl-sphing-4-enine + GDP + H(+). It carries out the reaction N-acetyl-alpha-neuraminosyl-(2-&gt;3)-beta-D-galactosyl-(1-&gt;3)-N-acetyl-beta-D-glucosaminyl-(1-&gt;3)-beta-D-galactosyl-(1-&gt;4)-beta-D-glucosyl-(1&lt;-&gt;1')-N-acyl-sphing-4-enine + GDP-beta-L-fucose = N-acetyl-alpha-neuraminosyl-(2-&gt;3)-beta-D-galactosyl-(1-&gt;3)-alpha-L-fucosyl-(1-&gt;4)-[N-acetyl-beta-D-glucosaminyl-(1-&gt;3)]-beta-D-galactosyl-(1-&gt;4)-beta-D-glucosyl-(1&lt;-&gt;1')-N-acyl-sphing-4-enine + GDP + H(+). The catalysed reaction is beta-D-galactosyl-(1-&gt;3)-N-acetyl-D-glucosamine + GDP-beta-L-fucose = beta-D-galactosyl-(1-&gt;3)-[alpha-L-fucosyl-(1-&gt;4)]-N-acetyl-D-glucosamine + GDP + H(+). The enzyme catalyses alpha-L-Fuc-(1-&gt;2)-beta-D-Gal-(1-&gt;3)-D-GlcNAc + GDP-beta-L-fucose = alpha-L-Fuc-(1-&gt;2)-beta-D-Gal-(1-&gt;3)-[alpha-L-Fuc-(1-&gt;4)]-D-GlcNAc + GDP + H(+). It catalyses the reaction alpha-L-Fuc-(1-&gt;2)-beta-D-Gal-(1-&gt;4)-D-GlcNAc + GDP-beta-L-fucose = alpha-L-Fuc-(1-&gt;2)-beta-D-Gal-(1-&gt;4)-[alpha-L-Fuc-(1-&gt;3)]-D-GlcNAc + GDP + H(+). It carries out the reaction beta-D-galactosyl-(1-&gt;4)-N-acetyl-D-glucosamine + GDP-beta-L-fucose = beta-D-galactosyl-(1-&gt;4)-[alpha-L-fucosyl-(1-&gt;3)]-N-acetyl-D-glucosamine + GDP + H(+). The catalysed reaction is lactose + GDP-beta-L-fucose = beta-D-galactosyl-(1-&gt;4)-[alpha-L-fucosyl-(1-&gt;3)]-D-glucose + GDP + H(+). The enzyme catalyses an alpha-Neu5Ac-(2-&gt;3)-beta-D-Gal-(1-&gt;3)-D-GlcNAc derivative + GDP-beta-L-fucose = an alpha-Neu5Ac-(2-&gt;3)-beta-D-Gal-(1-&gt;3)-[alpha-L-Fuc-(1-&gt;4)]-beta-D-GlcNAc derivative + GDP + H(+). It functions in the pathway protein modification; protein glycosylation. In terms of biological role, catalyzes the transfer of L-fucose, from a guanosine diphosphate-beta-L-fucose, to both the subterminal N-acetyl glucosamine (GlcNAc) of type 1 chain (beta-D-Gal-(1-&gt;3)-beta-D-GlcNAc) glycolipids and oligosaccharides via an alpha(1,4) linkage, and the subterminal glucose (Glc) or GlcNAc of type 2 chain (beta-D-Gal-(1-&gt;4)-beta-D-GlcNAc) oligosaccharides via an alpha(1,3) linkage, independently of the presence of terminal alpha-L-fucosyl-(1,2) moieties on the terminal galactose of these acceptors and participates in the blood groups Lewis determination and expression of Lewis a (Le(a)), lewis b (Le(b)), Lewis x/SSEA-1 (Le(x)) and lewis y (Le(y)) antigens. Also catalyzes the transfer of L-fucose to subterminal GlcNAc of sialyl- and disialyl-lactotetraosylceramide to produce sialyl Lewis a (sLe(a)) and disialyl Lewis a via an alpha(1,4) linkage and therefore may regulate cell surface sialyl Lewis a expression and consequently regulates adhesive properties to E-selectin, cell proliferation and migration. Catalyzes the transfer of an L-fucose to 3'-sialyl-N-acetyllactosamine by an alpha(1,3) linkage, which allows the formation of sialyl-Lewis x structure and therefore may regulate the sialyl-Lewis x surface antigen expression and consequently adhesive properties to E-selectin. Prefers type 1 chain over type 2 acceptors. Type 1 tetrasaccharide is a better acceptor than type 1 disaccharide suggesting that a beta anomeric configuration of GlcNAc in the substrate is preferred. Lewis-positive (Le(+)) individuals have an active enzyme while Lewis-negative (Le(-)) individuals have an inactive enzyme. This chain is 3-galactosyl-N-acetylglucosaminide 4-alpha-L-fucosyltransferase FUT3, found in Bos taurus (Bovine).